The sequence spans 425 residues: Phosphomethylpyrimidine synthase (425 aa).

Residues M94, Y123, H162, 184–186 (SRG), 225–228 (NGMR), and E264 each bind substrate. H268 serves as a coordination point for Zn(2+). A substrate-binding site is contributed by Y291. Position 332 (H332) interacts with Zn(2+). [4Fe-4S] cluster is bound by residues C407, C410, and C414.

This sequence belongs to the ThiC family. The cofactor is [4Fe-4S] cluster.

It carries out the reaction 5-amino-1-(5-phospho-beta-D-ribosyl)imidazole + S-adenosyl-L-methionine = 4-amino-2-methyl-5-(phosphooxymethyl)pyrimidine + CO + 5'-deoxyadenosine + formate + L-methionine + 3 H(+). It participates in cofactor biosynthesis; thiamine diphosphate biosynthesis. Catalyzes the synthesis of the hydroxymethylpyrimidine phosphate (HMP-P) moiety of thiamine from aminoimidazole ribotide (AIR) in a radical S-adenosyl-L-methionine (SAM)-dependent reaction. This chain is Phosphomethylpyrimidine synthase, found in Methanoregula boonei (strain DSM 21154 / JCM 14090 / 6A8).